Here is a 483-residue protein sequence, read N- to C-terminus: MDDALAHLPRAFAGKTVLVLGDVMLDRFIYGAVDRISPEAPVPVIAVEKETAMLGGAGNVARNVAALGAKAVLIGLVGRDDAGAALRGMIDAEAGLEAELVVDPARRTTEKVRYISGSHQMLRVDREDRSPGDGAALLAAFETRLASADVVVLSDYAKGVLTPAVVRGAIDAAKAAGKPVIVDPKSRDFARYDGATLIKPNRKEAAEATGIVETSDAASEDAGAAILAMAPGLQAALITRGGAGMTLAVRNQPPIHLPATAIEVFDVSGAGDTVAATLALAVAAGASLAQAAQLANLAGGLVVAKLGTDVVTAAELTACASSAQGEPGEIKIADREQAQRIVEGWRARGLKVGFTNGCFDLLHPGHVSLLSQAKAACDRLIVGLNTDASVSKLKGPTRPVQKEQGRATVLASLSSVDLVVLFDEDTPLELIKAFRPDVLVKGADYTVETVVGSDVVLGYGGKVVLAELKQGQSTTNLIARMNS.

The interval 1–327 (MDDALAHLPR…ACASSAQGEP (327 aa)) is ribokinase. 201 to 204 (NRKE) is a binding site for ATP. Asp272 is an active-site residue. The tract at residues 354 to 483 (FTNGCFDLLH…TTNLIARMNS (130 aa)) is cytidylyltransferase.

It in the N-terminal section; belongs to the carbohydrate kinase PfkB family. In the C-terminal section; belongs to the cytidylyltransferase family. As to quaternary structure, homodimer.

The enzyme catalyses D-glycero-beta-D-manno-heptose 7-phosphate + ATP = D-glycero-beta-D-manno-heptose 1,7-bisphosphate + ADP + H(+). It catalyses the reaction D-glycero-beta-D-manno-heptose 1-phosphate + ATP + H(+) = ADP-D-glycero-beta-D-manno-heptose + diphosphate. Its pathway is nucleotide-sugar biosynthesis; ADP-L-glycero-beta-D-manno-heptose biosynthesis; ADP-L-glycero-beta-D-manno-heptose from D-glycero-beta-D-manno-heptose 7-phosphate: step 1/4. The protein operates within nucleotide-sugar biosynthesis; ADP-L-glycero-beta-D-manno-heptose biosynthesis; ADP-L-glycero-beta-D-manno-heptose from D-glycero-beta-D-manno-heptose 7-phosphate: step 3/4. Functionally, catalyzes the phosphorylation of D-glycero-D-manno-heptose 7-phosphate at the C-1 position to selectively form D-glycero-beta-D-manno-heptose-1,7-bisphosphate. In terms of biological role, catalyzes the ADP transfer from ATP to D-glycero-beta-D-manno-heptose 1-phosphate, yielding ADP-D-glycero-beta-D-manno-heptose. This is Bifunctional protein HldE from Caulobacter vibrioides (strain ATCC 19089 / CIP 103742 / CB 15) (Caulobacter crescentus).